The primary structure comprises 466 residues: Citrate synthase, mitochondrial (466 aa).

Residues 1–27 (MALLTAAARLLGAKNSSCLVLAARHAS) constitute a mitochondrion transit peptide. An SIFI-degron motif is present at residues 2-21 (ALLTAAARLLGAKNSSCLVL). The residue at position 57 (Lys-57) is an N6-succinyllysine. An N6-acetyllysine; alternate modification is found at Lys-76. Residue Lys-76 is modified to N6-succinyllysine; alternate. An N6-succinyllysine mark is found at Lys-103 and Lys-193. Ser-226 carries the phosphoserine modification. His-301 is a catalytic residue. Residues Lys-321 and Lys-327 each carry the N6-acetyllysine; alternate modification. N6-succinyllysine; alternate is present on residues Lys-321 and Lys-327. The active site involves His-347. Arg-356 is an oxaloacetate binding site. The residue at position 375 (Lys-375) is an N6-acetyllysine; alternate. At Lys-375 the chain carries N6-succinyllysine; alternate. N6-acetyllysine is present on Lys-382. Position 393 is an N6-acetyllysine; alternate (Lys-393). Lys-393 is modified (N6-succinyllysine; alternate). Lys-395 carries the post-translational modification N6,N6,N6-trimethyllysine. Residue Asp-402 is part of the active site. Arg-428 and Arg-448 together coordinate oxaloacetate. Lys-450 carries the post-translational modification N6-succinyllysine. Lys-459 is modified (N6-acetyllysine; alternate). Lys-459 carries the post-translational modification N6-succinyllysine; alternate.

The protein belongs to the citrate synthase family. In terms of assembly, homodimer. In terms of processing, methylated. Trimethylation at Lys-395 by CSKMT decreases citrate synthase activity. In response to mitochondrial stress, the precursor protein is ubiquitinated by the SIFI complex in the cytoplasm before mitochondrial import, leading to its degradation. Within the SIFI complex, UBR4 initiates ubiquitin chain that are further elongated or branched by KCMF1. In terms of tissue distribution, expressed in the head region and flagellum of epididymal sperm.

It localises to the mitochondrion matrix. It carries out the reaction oxaloacetate + acetyl-CoA + H2O = citrate + CoA + H(+). The protein operates within carbohydrate metabolism; tricarboxylic acid cycle; isocitrate from oxaloacetate: step 1/2. Its function is as follows. Key enzyme of the Krebs tricarboxylic acid cycle which catalyzes the synthesis of citrate from acetyl coenzyme A and oxaloacetate. The polypeptide is Citrate synthase, mitochondrial (Cs) (Rattus norvegicus (Rat)).